The chain runs to 368 residues: Cobalt-precorrin-5B C(1)-methyltransferase (368 aa).

Belongs to the CbiD family.

The enzyme catalyses Co-precorrin-5B + S-adenosyl-L-methionine = Co-precorrin-6A + S-adenosyl-L-homocysteine. It functions in the pathway cofactor biosynthesis; adenosylcobalamin biosynthesis; cob(II)yrinate a,c-diamide from sirohydrochlorin (anaerobic route): step 6/10. Functionally, catalyzes the methylation of C-1 in cobalt-precorrin-5B to form cobalt-precorrin-6A. This is Cobalt-precorrin-5B C(1)-methyltransferase from Synechococcus sp. (strain CC9605).